The primary structure comprises 176 residues: Large ribosomal subunit protein uL6 (176 aa).

It belongs to the universal ribosomal protein uL6 family. Part of the 50S ribosomal subunit.

This protein binds to the 23S rRNA, and is important in its secondary structure. It is located near the subunit interface in the base of the L7/L12 stalk, and near the tRNA binding site of the peptidyltransferase center. In Paraburkholderia xenovorans (strain LB400), this protein is Large ribosomal subunit protein uL6.